Reading from the N-terminus, the 320-residue chain is Malate dehydrogenase (320 aa).

NAD(+) is bound by residues 10-15 (GAGMIG) and Asp-34. Residues Arg-83 and Arg-89 each coordinate substrate. NAD(+) is bound by residues Asn-96 and 119–121 (ITN). Substrate is bound by residues Asn-121 and Arg-152. Residue His-176 is the Proton acceptor of the active site.

Belongs to the LDH/MDH superfamily. MDH type 3 family.

It catalyses the reaction (S)-malate + NAD(+) = oxaloacetate + NADH + H(+). Catalyzes the reversible oxidation of malate to oxaloacetate. The sequence is that of Malate dehydrogenase from Caulobacter vibrioides (strain NA1000 / CB15N) (Caulobacter crescentus).